The sequence spans 907 residues: Clathrin coat assembly protein AP180 (907 aa).

The 132-residue stretch at 14-145 (QYSVTGSAVA…FSYRQMAFDF (132 aa)) folds into the ENTH domain. 4 disordered regions span residues 285–326 (LEGK…DTSP), 342–380 (TSKPSSDLLDLQPDFSSGGAAAAAAPAPPPPAGGATAWG), 393–414 (SVPSEAQISDPFAPEPTPPTTT), and 505–525 (VPVVTPTASTAPPVPATAPSP). Residues S296, S300, and S306 each carry the phosphoserine modification. Positions 302–324 (LSKSSPATTVTSPNSTPAKTIDT) are enriched in polar residues. T310 carries O-linked (GlcNAc) threonine glycosylation. A Phosphoserine modification is found at S313. At T317 the chain carries Phosphothreonine. Residues 505-515 (VPVVTPTASTA) are compositionally biased toward low complexity. Residues 516-525 (PPVPATAPSP) are compositionally biased toward pro residues. 5 positions are modified to phosphoserine: S596, S602, S623, S629, and S763. R865 carries the asymmetric dimethylarginine; alternate modification. Position 865 is an omega-N-methylarginine; alternate (R865). A disordered region spans residues 867–907 (PFGAAAVPGTQLSPSPTPASQSPKKPPAKDPLADLNIKDFL). Positions 893 to 907 (PAKDPLADLNIKDFL) are enriched in basic and acidic residues.

It belongs to the PICALM/SNAP91 family. As to quaternary structure, binds AP2A2. Interacts with AP2B1; clathrin competes with SNAP91. In terms of processing, thr-310 can be modified by the addition of N-acetylglucosamine which can be further phosphorylated. There is no evidence for direct Thr-310 phosphorylation.

It is found in the cell membrane. The protein resides in the membrane. Its subcellular location is the coated pit. Adaptins are components of the adapter complexes which link clathrin to receptors in coated vesicles. Clathrin-associated protein complexes are believed to interact with the cytoplasmic tails of membrane proteins, leading to their selection and concentration. Binding of AP180 to clathrin triskelia induces their assembly into 60-70 nm coats. This Homo sapiens (Human) protein is Clathrin coat assembly protein AP180 (SNAP91).